A 711-amino-acid polypeptide reads, in one-letter code: Ent-copalyl diphosphate synthase 1 (711 aa).

Lys145 is a binding site for substrate. Mg(2+) is bound by residues Asp277 and Asp279. Residues 277–280 (DIDD) carry the DXDD motif motif. Substrate is bound at residue Lys364.

Belongs to the terpene synthase family. Tpsc subfamily. Mg(2+) serves as cofactor.

It carries out the reaction (2E,6E,10E)-geranylgeranyl diphosphate = ent-copalyl diphosphate. The protein operates within secondary metabolite biosynthesis; terpenoid biosynthesis. Involved in the biosynthesis of ent-kaurene diterpenoids natural products such as oridonin, miltiradiene, eriocalyxin B and nezukol, known to exhibit antitumor, anti-inflammatory and antibacterial activities. Catalyzes the conversion of (2E,6E,10E)-geranylgeranyl diphosphate (GGPP) to ent-copalyl diphosphate (ent-CPP). The sequence is that of Ent-copalyl diphosphate synthase 1 from Isodon japonicus (Scutellaria japonica).